Reading from the N-terminus, the 370-residue chain is DnaJ homolog subfamily B member 12 (370 aa).

Position 1 is an N-acetylmethionine (M1). The segment at N51–K92 is disordered. The 65-residue stretch at D110–G174 folds into the J domain. At H185 the chain carries Pros-methylhistidine. A helical membrane pass occupies residues G242–L262.

It belongs to the DnaJ family. DNAJB12/DNAJB14 subfamily. In terms of assembly, homodimer and homotetramer. Interacts (via J domain) with HSPA8/Hsc70. Forms a multiprotein complex, at least composed of DNAJB12, DNAJB14, HSPA8/Hsc70 and SGTA; interaction with DNAJB14 and HSPA8/Hsc70 is direct. Post-translationally, methylated at His-185 by METTL9.

It localises to the endoplasmic reticulum membrane. The protein resides in the nucleus membrane. In terms of biological role, acts as a co-chaperone with HSPA8/Hsc70; required to promote protein folding and trafficking, prevent aggregation of client proteins, and promote unfolded proteins to endoplasmic reticulum-associated degradation (ERAD) pathway. Acts by determining HSPA8/Hsc70's ATPase and polypeptide-binding activities. Can also act independently of HSPA8/Hsc70: together with DNAJB14, acts as a chaperone that promotes maturation of potassium channels KCND2 and KCNH2 by stabilizing nascent channel subunits and assembling them into tetramers. While stabilization of nascent channel proteins is dependent on HSPA8/Hsc70, the process of oligomerization of channel subunits is independent of HSPA8/Hsc70. When overexpressed, forms membranous structures together with DNAJB14 and HSPA8/Hsc70 within the nucleus; the role of these structures, named DJANGOs, is still unclear. The protein is DnaJ homolog subfamily B member 12 (DNAJB12) of Bos taurus (Bovine).